The primary structure comprises 213 residues: Neuromodulin (213 aa).

The segment at 1 to 213 (MLCCIRRTKP…AEEAGKDQNV (213 aa)) is disordered. Residues Cys-3 and Cys-4 are each lipidated (S-palmitoyl cysteine). A compositionally biased stretch (basic and acidic residues) spans 9 to 33 (KPVEKNEEADQEIKQDGTKPEENAH). Residues 32 to 61 (AHKAATKIQASFRGHITRKKMKDEDKDGEN) form the IQ domain. Acidic residues predominate over residues 57–73 (KDGENDTAPDESAETEE). A compositionally biased stretch (basic and acidic residues) spans 74–86 (KEERVSPSEEKPV). The segment covering 102-122 (PNSPAAEAPPTAATDSAPSDT) has biased composition (low complexity). Residues 157-169 (EKEEEEEEEEEEE) show a composition bias toward acidic residues. The span at 191-213 (QTDKKEALDDSKPAEEAGKDQNV) shows a compositional bias: basic and acidic residues.

The protein belongs to the neuromodulin family. Binds calmodulin with a greater affinity in the absence of Ca(2+) than in its presence. In terms of processing, palmitoylated. Palmitoylation is essential for plasma membrane association.

The protein localises to the cell membrane. It localises to the cell projection. The protein resides in the growth cone membrane. Its subcellular location is the synapse. It is found in the filopodium membrane. Its function is as follows. This protein is associated with nerve growth. It is a major component of the motile 'growth cones' that form the tips of elongating axons. Plays a role in axonal and dendritic filopodia induction. The polypeptide is Neuromodulin (gap43) (Carassius auratus (Goldfish)).